The chain runs to 571 residues: Vesicle-associated protein 1-4 (571 aa).

Positions 1–126 constitute an MSP 1 domain; sequence MSTDELLTFD…EETIFKIIYV (126 aa). The interval 132 to 154 is disordered; that stretch reads QSPVQEGLEDGSSPSASVSDKGN. The segment covering 143-153 has biased composition (polar residues); sequence SSPSASVSDKG. One can recognise an MSP 2 domain in the interval 176-296; the sequence is LLIIDPVDVQ…EETRLKVMYV (121 aa). The interval 297 to 322 is disordered; that stretch reads TPPQPPSPVQEGTEEGSSPRASVSDN. Residues 311-322 are compositionally biased toward polar residues; that stretch reads EGSSPRASVSDN. Residues 356 to 493 form the TIR domain; the sequence is PQYQVFINFR…KWKEALSSVF (138 aa). Residue Glu430 is part of the active site.

It belongs to the VAMP-associated protein (VAP) (TC 9.B.17) family.

It catalyses the reaction NAD(+) + H2O = ADP-D-ribose + nicotinamide + H(+). In terms of biological role, may play a role in vesicle trafficking. The sequence is that of Vesicle-associated protein 1-4 (PVA14) from Arabidopsis thaliana (Mouse-ear cress).